A 316-amino-acid chain; its full sequence is NAD kinase 1 (316 aa).

The active-site Proton acceptor is aspartate 67. Aspartate 67–glycine 68 contributes to the NAD(+) binding site. A disordered region spans residues arginine 132–aspartate 151. NAD(+) contacts are provided by residues asparagine 160–aspartate 161, arginine 190, and aspartate 192.

The protein belongs to the NAD kinase family. A divalent metal cation serves as cofactor.

Its subcellular location is the cytoplasm. It carries out the reaction NAD(+) + ATP = ADP + NADP(+) + H(+). Its function is as follows. Involved in the regulation of the intracellular balance of NAD and NADP, and is a key enzyme in the biosynthesis of NADP. Catalyzes specifically the phosphorylation on 2'-hydroxyl of the adenosine moiety of NAD to yield NADP. The polypeptide is NAD kinase 1 (Parasynechococcus marenigrum (strain WH8102)).